Here is a 271-residue protein sequence, read N- to C-terminus: Phosphate import ATP-binding protein PstB (271 aa).

In terms of domain architecture, ABC transporter spans 24 to 266 (MIGQDVSVYY…PDDPRTQDYI (243 aa)). 56–63 (GPSGCGKS) contributes to the ATP binding site.

Belongs to the ABC transporter superfamily. Phosphate importer (TC 3.A.1.7) family. As to quaternary structure, the complex is composed of two ATP-binding proteins (PstB), two transmembrane proteins (PstC and PstA) and a solute-binding protein (PstS).

Its subcellular location is the cell inner membrane. The catalysed reaction is phosphate(out) + ATP + H2O = ADP + 2 phosphate(in) + H(+). In terms of biological role, part of the ABC transporter complex PstSACB involved in phosphate import. Responsible for energy coupling to the transport system. In Rhizobium etli (strain ATCC 51251 / DSM 11541 / JCM 21823 / NBRC 15573 / CFN 42), this protein is Phosphate import ATP-binding protein PstB.